Consider the following 80-residue polypeptide: Metallothionein-like protein BIF98 (80 aa).

This sequence belongs to the metallothionein superfamily. Type 15 family.

Metallothioneins have a high content of cysteine residues that bind various heavy metals. The protein is Metallothionein-like protein BIF98 of Brassica rapa subsp. pekinensis (Chinese cabbage).